The following is a 541-amino-acid chain: Membrane protein insertase YidC (541 aa).

The chain crosses the membrane as a helical span at residues 6–26; it reads SLLVLALIFISFLVYQQWQLD. Residues 34–56 are disordered; sequence EQTTSITATSDVPASSPSNSQAI. The next 4 helical transmembrane spans lie at 337–357, 416–436, 454–474, and 495–515; these read FWLLTFIQGIVSNWGLAIICV, LGGCLPILLQMPIFIALYWTF, LSAQDPYYILPILMGISMFLL, and PLVFMFFFLWFPSGLVLYWLV.

Belongs to the OXA1/ALB3/YidC family. Type 1 subfamily. As to quaternary structure, interacts with the Sec translocase complex via SecD. Specifically interacts with transmembrane segments of nascent integral membrane proteins during membrane integration.

The protein localises to the cell inner membrane. Its function is as follows. Required for the insertion and/or proper folding and/or complex formation of integral membrane proteins into the membrane. Involved in integration of membrane proteins that insert both dependently and independently of the Sec translocase complex, as well as at least some lipoproteins. Aids folding of multispanning membrane proteins. The protein is Membrane protein insertase YidC of Haemophilus influenzae (strain 86-028NP).